Here is a 1447-residue protein sequence, read N- to C-terminus: DNA topoisomerase 2 (1447 aa).

Residues N72, N101, 129–131 (SSN), and 142–149 (GRNGYGAK) contribute to the ATP site. The interval 323–325 (KKK) is interaction with DNA. 357–359 (QTK) provides a ligand contact to ATP. Positions 435-552 (CTLILTEGDS…ELLRLPFLEE (118 aa)) constitute a Toprim domain. Mg(2+) is bound by residues E441, D521, and D523. The 475-residue stretch at 695-1169 (IPSLVDGLKP…TPEMLWLDDL (475 aa)) folds into the Topo IIA-type catalytic domain. The active-site O-(5'-phospho-DNA)-tyrosine intermediate is the Y785. The interval 972-981 (KLTTTLSTNQ) is interaction with DNA. Disordered stretches follow at residues 1079 to 1110 (EDAEQADEEDEEEEEAAPSVSSKAKKEKEVDP), 1183 to 1231 (ERAE…DGEP), and 1246 to 1447 (AAAK…DFNC). The span at 1081 to 1094 (AEQADEEDEEEEEA) shows a compositional bias: acidic residues. A compositionally biased stretch (basic and acidic residues) spans 1255–1281 (KEPKKPKEPKEPKVKKEPKGKQIKAEP). The segment covering 1283-1293 (ASGDEVDEFDA) has biased composition (acidic residues). Phosphoserine is present on S1284. Composition is skewed to basic and acidic residues over residues 1310–1325 (VKKEPGEKKPRQKKEN) and 1332–1359 (SKIDFSKAKAKKSDDDVEEVTPRAERPG). Phosphoserine is present on S1344. The residue at position 1352 (T1352) is a Phosphothreonine. 4 positions are modified to phosphoserine: S1374, S1385, S1392, and S1396. Residues 1374–1394 (SDEEEDGGNVGSDDDGNASDD) are compositionally biased toward acidic residues. The segment covering 1395-1408 (DSPKRPAKRGREDE) has biased composition (basic and acidic residues). Positions 1413–1423 (AKKKAPPKKRR) are enriched in basic residues. A compositionally biased stretch (acidic residues) spans 1427-1447 (ESDDDDIEIDEDDDDDSDFNC).

It belongs to the type II topoisomerase family. Homodimer. Interacts with mod(mdg4). Interacts with barr. Interacts with ph-p. Interacts with mle; the interaction mediates association with the MSL dosage compensation complex. The cofactor is Mg(2+). It depends on Mn(2+) as a cofactor. Ca(2+) serves as cofactor. Post-translationally, phosphorylated. Phosphorylation by casein kinase II enhances ATPase activity.

Its subcellular location is the nucleus. The protein localises to the chromosome. It localises to the cytoplasm. It carries out the reaction ATP-dependent breakage, passage and rejoining of double-stranded DNA.. In terms of biological role, control of topological states of DNA by transient breakage and subsequent rejoining of DNA strands. Topoisomerase II makes double-strand breaks. Essential during mitosis and meiosis for proper segregation of daughter chromosomes. During meiosis, it disrupts heterochromatic connections between achiasmate and chiasmate homologs after spindle assembly so that chromosomes can separate at prometaphase I. During mitosis, it functions in the separation of sister chromatids by establishing amphitelic kinetochore attachments in mitotic spindles. May have a role in chromatin condensation and chromosome structure. May be involved in X-chromosome dosage compensation, perhaps by modifying the topological state of compensated genes. Regulates activity of the gypsy chromatin insulator complex by binding to mod(mdg4) and preventing its degradation. The sequence is that of DNA topoisomerase 2 from Drosophila melanogaster (Fruit fly).